A 546-amino-acid chain; its full sequence is Chaperonin GroEL (546 aa).

Residues 30-33, K51, 87-91, G415, 479-481, and D495 each bind ATP; these read TLGP, DGTTT, and NAA.

Belongs to the chaperonin (HSP60) family. In terms of assembly, forms a cylinder of 14 subunits composed of two heptameric rings stacked back-to-back. Interacts with the co-chaperonin GroES.

The protein resides in the cytoplasm. The enzyme catalyses ATP + H2O + a folded polypeptide = ADP + phosphate + an unfolded polypeptide.. Functionally, together with its co-chaperonin GroES, plays an essential role in assisting protein folding. The GroEL-GroES system forms a nano-cage that allows encapsulation of the non-native substrate proteins and provides a physical environment optimized to promote and accelerate protein folding. In Stutzerimonas stutzeri (strain A1501) (Pseudomonas stutzeri), this protein is Chaperonin GroEL.